A 257-amino-acid chain; its full sequence is Deoxyribose-phosphate aldolase (257 aa).

Catalysis depends on D102, which acts as the Proton donor/acceptor. K166 (schiff-base intermediate with acetaldehyde) is an active-site residue. Catalysis depends on K198, which acts as the Proton donor/acceptor.

It belongs to the DeoC/FbaB aldolase family. DeoC type 2 subfamily.

Its subcellular location is the cytoplasm. The enzyme catalyses 2-deoxy-D-ribose 5-phosphate = D-glyceraldehyde 3-phosphate + acetaldehyde. The protein operates within carbohydrate degradation; 2-deoxy-D-ribose 1-phosphate degradation; D-glyceraldehyde 3-phosphate and acetaldehyde from 2-deoxy-alpha-D-ribose 1-phosphate: step 2/2. Its function is as follows. Catalyzes a reversible aldol reaction between acetaldehyde and D-glyceraldehyde 3-phosphate to generate 2-deoxy-D-ribose 5-phosphate. This Shewanella amazonensis (strain ATCC BAA-1098 / SB2B) protein is Deoxyribose-phosphate aldolase.